Here is a 54-residue protein sequence, read N- to C-terminus: UPF0391 membrane protein msr3702 (54 aa).

Helical transmembrane passes span 4-24 (WALV…GGIA) and 30-50 (IAQI…LAGL).

This sequence belongs to the UPF0391 family.

Its subcellular location is the cell membrane. The chain is UPF0391 membrane protein msr3702 from Mesorhizobium japonicum (strain LMG 29417 / CECT 9101 / MAFF 303099) (Mesorhizobium loti (strain MAFF 303099)).